The following is a 64-amino-acid chain: Large ribosomal subunit protein bL35 (64 aa).

It belongs to the bacterial ribosomal protein bL35 family.

The polypeptide is Large ribosomal subunit protein bL35 (Helicobacter hepaticus (strain ATCC 51449 / 3B1)).